We begin with the raw amino-acid sequence, 192 residues long: Large ribosomal subunit protein uL5 (192 aa).

It belongs to the universal ribosomal protein uL5 family. As to quaternary structure, part of the 50S ribosomal subunit; part of the 5S rRNA/L5/L18/L25 subcomplex. Contacts the 5S rRNA and the P site tRNA. Forms a bridge to the 30S subunit in the 70S ribosome.

In terms of biological role, this is one of the proteins that bind and probably mediate the attachment of the 5S RNA into the large ribosomal subunit, where it forms part of the central protuberance. In the 70S ribosome it contacts protein S13 of the 30S subunit (bridge B1b), connecting the 2 subunits; this bridge is implicated in subunit movement. Contacts the P site tRNA; the 5S rRNA and some of its associated proteins might help stabilize positioning of ribosome-bound tRNAs. This chain is Large ribosomal subunit protein uL5, found in Mesorhizobium japonicum (strain LMG 29417 / CECT 9101 / MAFF 303099) (Mesorhizobium loti (strain MAFF 303099)).